We begin with the raw amino-acid sequence, 298 residues long: Biphenyl-2,3-diol 1,2-dioxygenase (298 aa).

2 consecutive VOC domains span residues 5–119 and 143–264; these read SLGY…IYYG and GLGH…YGWS. His146, His210, and Glu260 together coordinate Fe cation.

The protein belongs to the extradiol ring-cleavage dioxygenase family. As to quaternary structure, homooctamer. The enzyme is composed of two planar tetramers rotated at 45 degrees relative to each other, with a channel in the middle. The cofactor is Fe(2+).

The catalysed reaction is biphenyl-2,3-diol + O2 = 2-hydroxy-6-oxo-6-phenylhexa-2,4-dienoate + H(+). It functions in the pathway xenobiotic degradation; biphenyl degradation; 2-hydroxy-2,4-pentadienoate and benzoate from biphenyl: step 3/4. Its function is as follows. Shows a preference for catechols with groups immediately adjacent to the hydroxyl substituents. The polypeptide is Biphenyl-2,3-diol 1,2-dioxygenase (bphC) (Paraburkholderia xenovorans (strain LB400)).